Consider the following 291-residue polypeptide: N-acetylmannosamine kinase (291 aa).

Residues 5–12 (AIDIGGTK) and 132–139 (GVGGGVVC) each bind ATP. 4 residues coordinate Zn(2+): His156, Cys166, Cys168, and Cys173.

Belongs to the ROK (NagC/XylR) family. NanK subfamily. Homodimer.

The enzyme catalyses an N-acyl-D-mannosamine + ATP = an N-acyl-D-mannosamine 6-phosphate + ADP + H(+). It functions in the pathway amino-sugar metabolism; N-acetylneuraminate degradation; D-fructose 6-phosphate from N-acetylneuraminate: step 2/5. Its function is as follows. Catalyzes the phosphorylation of N-acetylmannosamine (ManNAc) to ManNAc-6-P. In Salmonella paratyphi B (strain ATCC BAA-1250 / SPB7), this protein is N-acetylmannosamine kinase.